A 1024-amino-acid chain; its full sequence is NLR family CARD domain-containing protein 4 (1024 aa).

In terms of domain architecture, CARD spans Met1–Ser88. Residues Glu95–Gly298 are nucleotide-binding domain (NBD). An NACHT domain is found at Ser163–Lys476. Gly169–Ser176 is a binding site for ATP. Positions Ser356–Glu463 are winged-helix domain (WHD). Ser533 bears the Phosphoserine mark. LRR repeat units lie at residues Phe578–Phe598, Lys656–Tyr679, Val735–Ser758, Leu762–Glu785, Leu787–Val812, Glu824–Leu847, Val848–Glu870, Leu878–His902, Lys911–Lys933, Leu936–Asn963, Lys965–Arg985, and Glu999–Leu1021.

As to quaternary structure, homooligomer; homooligomerizes to induce formation of the NLRC4 inflammasome. Homooligomerizes following activation by pathogenic proteins. Component of the NLRC4 inflammasome, at least composed of NLRC4 and caspase-1 (CASP1). Some NLRC4 inflammasomes contain PYCARD/ASC, while some others directly contact and activate CASP1. Interacts (via CARD domain) with PYCARD/ASC, pro-caspase-1 (CASP1), NOD2, BCL10 and NALP1 (NAC) by CARD-CARD interaction. Interacts with EIF2AK2/PKR. Post-translationally, phosphorylated at Ser-533 following infection of macrophages with S.typhimurium (Salmonella). Phosphorylation is essential for NLRC4 inflammasome function to promote caspase-1 activation and pyroptosis. PRKCD phosphorylates Ser-533 in vitro. As to expression, isoform 2 is expressed ubiquitously, although highly expressed in lung and spleen. Isoform 1 is highly expressed in lung, followed by leukocytes especially monocytes, lymph node, colon, brain, prostate, placenta, spleen, bone marrow and fetal liver. Isoform 4 is only detected in brain.

Its subcellular location is the cytoplasm. It localises to the cytosol. The protein resides in the inflammasome. Its function is as follows. Key component of inflammasomes that indirectly senses specific proteins from pathogenic bacteria and fungi and responds by assembling an inflammasome complex that promotes caspase-1 activation, cytokine production and macrophage pyroptosis. The NLRC4 inflammasome is activated as part of the innate immune response to a range of intracellular bacteria. In Homo sapiens (Human), this protein is NLR family CARD domain-containing protein 4 (NLRC4).